Consider the following 342-residue polypeptide: 4-hydroxythreonine-4-phosphate dehydrogenase (342 aa).

Substrate contacts are provided by His139 and Thr140. Residues His174, His219, and His274 each coordinate a divalent metal cation. Residues Lys282, Asn291, and Arg300 each contribute to the substrate site.

It belongs to the PdxA family. As to quaternary structure, homodimer. It depends on Zn(2+) as a cofactor. The cofactor is Mg(2+). Requires Co(2+) as cofactor.

The protein resides in the cytoplasm. The enzyme catalyses 4-(phosphooxy)-L-threonine + NAD(+) = 3-amino-2-oxopropyl phosphate + CO2 + NADH. The protein operates within cofactor biosynthesis; pyridoxine 5'-phosphate biosynthesis; pyridoxine 5'-phosphate from D-erythrose 4-phosphate: step 4/5. Its function is as follows. Catalyzes the NAD(P)-dependent oxidation of 4-(phosphooxy)-L-threonine (HTP) into 2-amino-3-oxo-4-(phosphooxy)butyric acid which spontaneously decarboxylates to form 3-amino-2-oxopropyl phosphate (AHAP). This chain is 4-hydroxythreonine-4-phosphate dehydrogenase, found in Mesorhizobium japonicum (strain LMG 29417 / CECT 9101 / MAFF 303099) (Mesorhizobium loti (strain MAFF 303099)).